A 270-amino-acid chain; its full sequence is MDFLVLIKYILLGLLQGFTEPIPVSSSGHLVLAQHFLGLNIEGFSFELLMNAGSLIAVLLVYKNDIFRLAVNGLSYVTTKNEKGKADFRFIIYLIIATIPAGVIGVLFDDEISAFFKDGVRITAVTLLITGLALFLIRNLRGRKSDGEIRLRDAVIIGFSQMVALVPGISRSGATIVPAMALGLKSETALRFSFLLYIPVSLGGTILSITDIFHDPRLGELFLPYLFAFIASVIATYFSLRWFMNIMAKGNLVYFSIYCFVIGIAVLIFA.

The next 6 membrane-spanning stretches (helical) occupy residues 41–61 (IEGF…VLLV), 88–108 (FRFI…GVLF), 117–137 (KDGV…LFLI), 192–212 (FSFL…ITDI), 218–238 (LGEL…ATYF), and 250–270 (GNLV…LIFA).

The protein belongs to the UppP family.

It localises to the cell membrane. It catalyses the reaction di-trans,octa-cis-undecaprenyl diphosphate + H2O = di-trans,octa-cis-undecaprenyl phosphate + phosphate + H(+). Catalyzes the dephosphorylation of undecaprenyl diphosphate (UPP). Confers resistance to bacitracin. The chain is Undecaprenyl-diphosphatase 1 from Bacillus licheniformis (strain ATCC 14580 / DSM 13 / JCM 2505 / CCUG 7422 / NBRC 12200 / NCIMB 9375 / NCTC 10341 / NRRL NRS-1264 / Gibson 46).